Consider the following 488-residue polypeptide: MTKTERYLQLRSMIPEMRRIKRIHFVGIGGAGMGGIAEVLVNEGYVVSGSDIAQNAVTDRLCLLGAKIHIGHGADNVQQADVVVVSTAINPENPEIIAAKELRIPIVRRAEMLAELMRYRHGVAIAGTHGKTTTTSLIASLYGQAGRDPTFVIGGLLNSAGTNARLGTSRYLIAEADESDASFLHLQPMVSVVTNIEADHMDTYGGDFEKLKSTFVDFLHNLPFYGVAVVCIDDAVVREIMPRIGRHMITYGFSDDADVQALNFHQQGHQCRFTVRRKGKEDLDLLLNLPGQHNVLNALAAIAVATEDEIDDSAIIQALAEFQGIGRRFQHLGKFATPKGEVMLVDDYGHHPSEVAATIKAARAGWPDKRLVMAYQPHRYTRTRDLYEDFIEVLSQVDCLLLLEVYSAGEAPIPGADGRALCRSIRLRGQLDPIFIASPDQLAEVLPDVLQEGDLLLTQGAGNIGALSRQLAASELGFSIAATTEVKP.

127–133 provides a ligand contact to ATP; that stretch reads GTHGKTT.

It belongs to the MurCDEF family.

Its subcellular location is the cytoplasm. The catalysed reaction is UDP-N-acetyl-alpha-D-muramate + L-alanine + ATP = UDP-N-acetyl-alpha-D-muramoyl-L-alanine + ADP + phosphate + H(+). It functions in the pathway cell wall biogenesis; peptidoglycan biosynthesis. In terms of biological role, cell wall formation. The protein is UDP-N-acetylmuramate--L-alanine ligase of Shewanella sp. (strain ANA-3).